Here is a 181-residue protein sequence, read N- to C-terminus: UPF0302 protein LMOf2365_1950 (181 aa).

Belongs to the UPF0302 family.

The protein is UPF0302 protein LMOf2365_1950 of Listeria monocytogenes serotype 4b (strain F2365).